Consider the following 1435-residue polypeptide: DNA polymerase III PolC-type (1435 aa).

The 157-residue stretch at 420–576 (YVVFDVETTG…YDTEATGYLL (157 aa)) folds into the Exonuclease domain.

This sequence belongs to the DNA polymerase type-C family. PolC subfamily.

The protein localises to the cytoplasm. The catalysed reaction is DNA(n) + a 2'-deoxyribonucleoside 5'-triphosphate = DNA(n+1) + diphosphate. Its function is as follows. Required for replicative DNA synthesis. This DNA polymerase also exhibits 3' to 5' exonuclease activity. This is DNA polymerase III PolC-type from Bacillus cereus (strain ATCC 14579 / DSM 31 / CCUG 7414 / JCM 2152 / NBRC 15305 / NCIMB 9373 / NCTC 2599 / NRRL B-3711).